The chain runs to 381 residues: Succinyl-diaminopimelate desuccinylase (381 aa).

Position 69 (His-69) interacts with Zn(2+). Asp-71 is an active-site residue. Position 103 (Asp-103) interacts with Zn(2+). Catalysis depends on Glu-137, which acts as the Proton acceptor. Positions 138, 166, and 355 each coordinate Zn(2+).

This sequence belongs to the peptidase M20A family. DapE subfamily. In terms of assembly, homodimer. The cofactor is Zn(2+). It depends on Co(2+) as a cofactor.

The enzyme catalyses N-succinyl-(2S,6S)-2,6-diaminopimelate + H2O = (2S,6S)-2,6-diaminopimelate + succinate. It participates in amino-acid biosynthesis; L-lysine biosynthesis via DAP pathway; LL-2,6-diaminopimelate from (S)-tetrahydrodipicolinate (succinylase route): step 3/3. Catalyzes the hydrolysis of N-succinyl-L,L-diaminopimelic acid (SDAP), forming succinate and LL-2,6-diaminopimelate (DAP), an intermediate involved in the bacterial biosynthesis of lysine and meso-diaminopimelic acid, an essential component of bacterial cell walls. The protein is Succinyl-diaminopimelate desuccinylase of Rickettsia akari (strain Hartford).